The primary structure comprises 108 residues: U-scoloptoxin(10)-Sm1a (108 aa).

A signal peptide spans 1–24 (MNKQWLHFFSVLLLCYVIEETCSL).

It belongs to the scoloptoxin-10 family. In terms of processing, contains 3 disulfide bonds. Expressed by the venom gland.

The protein localises to the secreted. This is U-scoloptoxin(10)-Sm1a from Scolopendra morsitans (Tanzanian blue ringleg centipede).